The primary structure comprises 250 residues: Putative (5-formylfuran-3-yl)methyl phosphate synthase (250 aa).

The active-site Schiff-base intermediate with substrate is the Lys29. The Proton acceptor role is filled by Lys87.

It belongs to the MfnB family.

It carries out the reaction 2 D-glyceraldehyde 3-phosphate = 4-(hydroxymethyl)-2-furancarboxaldehyde phosphate + phosphate + 2 H2O. Catalyzes the formation of 4-(hydroxymethyl)-2-furancarboxaldehyde phosphate (4-HFC-P) from two molecules of glyceraldehyde-3-P (GA-3-P). The polypeptide is Putative (5-formylfuran-3-yl)methyl phosphate synthase (Streptomyces griseus subsp. griseus (strain JCM 4626 / CBS 651.72 / NBRC 13350 / KCC S-0626 / ISP 5235)).